Consider the following 391-residue polypeptide: MFMFEKPHGMRDTLPMLYETKKKVRSSLTEVMALWGYQFMETPALEFYDTVGVQSAILDQQLFKLLDQEGQTLVLRPDMTAPIARVAASKLHKDDHPLRVGYAANVFRAQEREGGRPAEFEQVGVELIGDGSTSADAEVIALVIFSLKNAGLTSFKISIGHVGILDALFVEVLGNEERAHVLRRYLYEKNYVGYREHVKSLNLSSIDKSRLLELLELRGGIETCSRAASIVDSEKGKRAVLELETLWETLGDYGCTDDIKLDLGMVSHMSYYTGVLFEIYAENVGFPIGNGGRYDQLLGRFDSPAPATGFGIRTDRLLEALKPAEEQEKIDVVIFSTEQRKEAIRFAEEERRKGKKVVMQDLAGIGDIDQMTKSFQNVTYFIGARKEEKHG.

It belongs to the class-II aminoacyl-tRNA synthetase family. HisZ subfamily. Heteromultimer composed of HisG and HisZ subunits.

The protein resides in the cytoplasm. The protein operates within amino-acid biosynthesis; L-histidine biosynthesis; L-histidine from 5-phospho-alpha-D-ribose 1-diphosphate: step 1/9. Functionally, required for the first step of histidine biosynthesis. May allow the feedback regulation of ATP phosphoribosyltransferase activity by histidine. The protein is ATP phosphoribosyltransferase regulatory subunit of Bacillus licheniformis (strain ATCC 14580 / DSM 13 / JCM 2505 / CCUG 7422 / NBRC 12200 / NCIMB 9375 / NCTC 10341 / NRRL NRS-1264 / Gibson 46).